Reading from the N-terminus, the 482-residue chain is Methylenetetrahydrofolate--tRNA-(uracil-5-)-methyltransferase TrmFO (482 aa).

20 to 25 (GGGLAG) contacts FAD.

This sequence belongs to the MnmG family. TrmFO subfamily. The cofactor is FAD.

It localises to the cytoplasm. It catalyses the reaction uridine(54) in tRNA + (6R)-5,10-methylene-5,6,7,8-tetrahydrofolate + NADH + H(+) = 5-methyluridine(54) in tRNA + (6S)-5,6,7,8-tetrahydrofolate + NAD(+). It carries out the reaction uridine(54) in tRNA + (6R)-5,10-methylene-5,6,7,8-tetrahydrofolate + NADPH + H(+) = 5-methyluridine(54) in tRNA + (6S)-5,6,7,8-tetrahydrofolate + NADP(+). Functionally, catalyzes the folate-dependent formation of 5-methyl-uridine at position 54 (M-5-U54) in all tRNAs. This Rhodopseudomonas palustris (strain HaA2) protein is Methylenetetrahydrofolate--tRNA-(uracil-5-)-methyltransferase TrmFO.